The primary structure comprises 270 residues: Putative [LysW]-aminoadipate/[LysW]-glutamate kinase (270 aa).

Substrate is bound by residues 42–43 (GG), Arg-69, and Asn-177.

Belongs to the acetylglutamate kinase family. LysZ subfamily.

It localises to the cytoplasm. It catalyses the reaction [amino-group carrier protein]-C-terminal-N-(1,4-dicarboxybutan-1-yl)-L-glutamine + ATP = [amino-group carrier protein]-C-terminal-N-(1-carboxy-5-phosphooxy-5-oxopentan-1-yl)-L-glutamine + ADP. The enzyme catalyses [amino-group carrier protein]-C-terminal-gamma-(L-glutamyl)-L-glutamate + ATP = [amino-group carrier protein]-C-terminal-gamma-(5-phospho-L-glutamyl)-L-glutamate + ADP. It functions in the pathway amino-acid biosynthesis; L-lysine biosynthesis via AAA pathway; L-lysine from L-alpha-aminoadipate (Thermus route): step 2/5. Its pathway is amino-acid biosynthesis; L-arginine biosynthesis. In terms of biological role, involved in both the arginine and lysine biosynthetic pathways. Phosphorylates the LysW-bound precursors glutamate (for arginine biosynthesis), respectively alpha-aminoadipate (for lysine biosynthesis). The chain is Putative [LysW]-aminoadipate/[LysW]-glutamate kinase from Aeropyrum pernix (strain ATCC 700893 / DSM 11879 / JCM 9820 / NBRC 100138 / K1).